The chain runs to 248 residues: FCS-Like Zinc finger 14 (248 aa).

Polar residues predominate over residues 85-94 (VCRSEPNQPG). Residues 85–108 (VCRSEPNQPGRSDPVQFMSHGGST) are disordered. An FLZ-type zinc finger spans residues 181 to 224 (GFLNSCYLCRKKLHGQDIFIYRGEKAFCSTECRSSHIANDERKE).

This sequence belongs to the FLZ family. Interacts with KIN10 and KIN11 via its FLZ-type zinc finger domain. Interacts with KINB1, KINB2 and KINB3 via its N-terminal part.

It localises to the cytoplasm. The protein resides in the nucleus. Its function is as follows. May act as an adapter to facilitate the interaction of SnRK1 complex with effector proteins, conferring tissue- and stimulus-type specific differences in the SnRK1 regulation pathway. This is FCS-Like Zinc finger 14 from Arabidopsis thaliana (Mouse-ear cress).